Consider the following 72-residue polypeptide: Translation initiation factor IF-1 (72 aa).

Residues Met1–Lys72 enclose the S1-like domain. Residue Tyr60 is modified to Phosphotyrosine.

It belongs to the IF-1 family. Component of the 30S ribosomal translation pre-initiation complex which assembles on the 30S ribosome in the order IF-2 and IF-3, IF-1 and N-formylmethionyl-tRNA(fMet); mRNA recruitment can occur at any time during PIC assembly.

The protein localises to the cytoplasm. Functionally, one of the essential components for the initiation of protein synthesis. Stabilizes the binding of IF-2 and IF-3 on the 30S subunit to which N-formylmethionyl-tRNA(fMet) subsequently binds. Helps modulate mRNA selection, yielding the 30S pre-initiation complex (PIC). Upon addition of the 50S ribosomal subunit IF-1, IF-2 and IF-3 are released leaving the mature 70S translation initiation complex. The protein is Translation initiation factor IF-1 of Oceanobacillus iheyensis (strain DSM 14371 / CIP 107618 / JCM 11309 / KCTC 3954 / HTE831).